A 156-amino-acid chain; its full sequence is Cytochrome c-type biogenesis protein CcmE 1 (156 aa).

Topologically, residues 1–8 are cytoplasmic; that stretch reads MNATRKQR. A helical; Signal-anchor for type II membrane protein transmembrane segment spans residues 9 to 29; sequence LWLVIGVLAAAALAVTLIVFA. At 30–156 the chain is on the periplasmic side; sequence LQRNMSYLFT…ATVAPLTAPR (127 aa). Residues histidine 123 and tyrosine 127 each contribute to the heme site.

It belongs to the CcmE/CycJ family.

The protein localises to the cell inner membrane. In terms of biological role, heme chaperone required for the biogenesis of c-type cytochromes. Transiently binds heme delivered by CcmC and transfers the heme to apo-cytochromes in a process facilitated by CcmF and CcmH. This Xanthomonas axonopodis pv. citri (strain 306) protein is Cytochrome c-type biogenesis protein CcmE 1.